A 398-amino-acid polypeptide reads, in one-letter code: Subtilisin-like serine protease EN45_076310 (398 aa).

The signal sequence occupies residues 1–19 (MGFLKLLSTSLATLAVVNA). The propeptide at 20-115 (GKLLTANDGD…VEPDMVVNAT (96 aa)) is removed in mature form. An Inhibitor I9 domain is found at 35–113 (SYIVVMNDGV…KYVEPDMVVN (79 aa)). N-linked (GlcNAc...) asparagine glycosylation is present at asparagine 113. Residues 124-134 (PSWGLSRISSK) form an igE-binding region. The 274-residue stretch at 125–398 (SWGLSRISSK…KLLYNGINAQ (274 aa)) folds into the Peptidase S8 domain. Residue aspartate 157 is the Charge relay system of the active site. Positions 163–170 (GHADFGGR) are igE-binding. A disordered region spans residues 175 to 195 (TNTADNDDTDGNGHGTHTAST). Catalysis depends on histidine 188, which acts as the Charge relay system. The tract at residues 227–245 (IAGMDWAVKDSKSRGATGK) is igE-binding. The N-linked (GlcNAc...) asparagine glycan is linked to asparagine 249. The segment at 310 to 318 (SFTNFGSVV) is igE-binding. Catalysis depends on serine 343, which acts as the Charge relay system.

Belongs to the peptidase S8 family.

The protein localises to the secreted. With respect to regulation, inhibited by phenylmethanesulfonyl fluoride (PMSF) and diethyl pyrocarbonate (DEPC), but not by benzamidine. In terms of biological role, serine protease that hydrolyzes casein, gelatin and human collagen type IV, but not elastin in vitro. Hydrolyzes OCLN of the human lung epithelial cells at 202-Gln-|-Ser-203 and Gln-211-|-Ile-212. The protein is Subtilisin-like serine protease EN45_076310 of Penicillium chrysogenum (Penicillium notatum).